Reading from the N-terminus, the 86-residue chain is Small ribosomal subunit protein eS21 (86 aa).

The protein belongs to the eukaryotic ribosomal protein eS21 family. In terms of assembly, component of the 40S small ribosomal subunit.

The protein resides in the cytoplasm. It localises to the cytosol. Its subcellular location is the rough endoplasmic reticulum. The protein is Small ribosomal subunit protein eS21 (RPS21) of Suberites domuncula (Sponge).